The primary structure comprises 98 residues: Large ribosomal subunit protein bL25 (98 aa).

The interval 1-23 (MANFVLNAQARAEDKQGKGASRR) is disordered.

Belongs to the bacterial ribosomal protein bL25 family. In terms of assembly, part of the 50S ribosomal subunit; part of the 5S rRNA/L5/L18/L25 subcomplex. Contacts the 5S rRNA. Binds to the 5S rRNA independently of L5 and L18.

This is one of the proteins that binds to the 5S RNA in the ribosome where it forms part of the central protuberance. This chain is Large ribosomal subunit protein bL25, found in Acinetobacter baumannii (strain ATCC 17978 / DSM 105126 / CIP 53.77 / LMG 1025 / NCDC KC755 / 5377).